Reading from the N-terminus, the 445-residue chain is Ribosomal protein uS12 methylthiotransferase RimO (445 aa).

Residues 4–119 (LKFGLVSLGC…LDDAIEDFFN (116 aa)) form the MTTase N-terminal domain. Cys13, Cys48, Cys82, Cys156, Cys160, and Cys163 together coordinate [4Fe-4S] cluster. The Radical SAM core domain maps to 142–372 (TTGEYSSYVR…MLIQQQVSKN (231 aa)). A TRAM domain is found at 375–441 (AKKIGKVYKV…EYDLIGVVYN (67 aa)).

It belongs to the methylthiotransferase family. RimO subfamily. Requires [4Fe-4S] cluster as cofactor.

Its subcellular location is the cytoplasm. It catalyses the reaction L-aspartate(89)-[ribosomal protein uS12]-hydrogen + (sulfur carrier)-SH + AH2 + 2 S-adenosyl-L-methionine = 3-methylsulfanyl-L-aspartate(89)-[ribosomal protein uS12]-hydrogen + (sulfur carrier)-H + 5'-deoxyadenosine + L-methionine + A + S-adenosyl-L-homocysteine + 2 H(+). Functionally, catalyzes the methylthiolation of an aspartic acid residue of ribosomal protein uS12. This is Ribosomal protein uS12 methylthiotransferase RimO from Clostridium acetobutylicum (strain ATCC 824 / DSM 792 / JCM 1419 / IAM 19013 / LMG 5710 / NBRC 13948 / NRRL B-527 / VKM B-1787 / 2291 / W).